The chain runs to 176 residues: Translation initiation factor IF-3 (176 aa).

The protein belongs to the IF-3 family. In terms of assembly, monomer.

The protein resides in the cytoplasm. IF-3 binds to the 30S ribosomal subunit and shifts the equilibrium between 70S ribosomes and their 50S and 30S subunits in favor of the free subunits, thus enhancing the availability of 30S subunits on which protein synthesis initiation begins. This is Translation initiation factor IF-3 from Streptococcus agalactiae serotype Ia (strain ATCC 27591 / A909 / CDC SS700).